The sequence spans 629 residues: MLLSELSHPNQLHGLTVSQLEEIACQIRERHLQVVSTSGGHLGPGLGVVELTLALYQTLDLDFDKVVWDVGHQGYPHKLITGRFSQFDSLRQQNGVAGYLKRSESKFDHFGAGHASTSISAALGMAIARDRKGDNYKCVAVIGDGALTGGMALEAINHAGHLPNTPLVVVLNDNDMSISPPVGALSSYLNKVRHSPPLQFLSDSVQESVKNIPLIGKDIPEELKNIKGSVRRLAVPKVGAVFEELGFTYMGPIDGHDIGNLINTFNAAHKLKKPVLVHVVTTKGKGYPYAEADQVGYHAQSSFDLTTGKSIPSKKPKPISYSKIFGQTLLKICEQDSKVVGITAAMATGTGLDILQKNIPDQYIDVGIAEQHAVTLAAGMSCDGLKPVVAIYSTFLQRAFDQLIHDVGIQNLPVSFVLDRAGIVGADGPTHQGQYDISYMRSIPNFVLMAPKDESELQRMLITSINHKGPTALRIPRGSGLGVAVMDEGWEPLNIGEAEILEEGNDILIIAYGSMVASALETAELLKAKNINSCIVNARFVKPLDKKLIMPLASRIQKVVTMEEGTLIGGFGSAIVELFNDNEINIPVYRIGIPDVLVDHASPDQSKEKLGLMPNQMADNIIKKFDLNN.

Residues histidine 72 and 113-115 each bind thiamine diphosphate; that span reads GHA. Aspartate 144 serves as a coordination point for Mg(2+). Residues 145 to 146, asparagine 174, tyrosine 287, and glutamate 370 each bind thiamine diphosphate; that span reads GA. Asparagine 174 contacts Mg(2+).

It belongs to the transketolase family. DXPS subfamily. Homodimer. It depends on Mg(2+) as a cofactor. Requires thiamine diphosphate as cofactor.

The catalysed reaction is D-glyceraldehyde 3-phosphate + pyruvate + H(+) = 1-deoxy-D-xylulose 5-phosphate + CO2. The protein operates within metabolic intermediate biosynthesis; 1-deoxy-D-xylulose 5-phosphate biosynthesis; 1-deoxy-D-xylulose 5-phosphate from D-glyceraldehyde 3-phosphate and pyruvate: step 1/1. Its function is as follows. Catalyzes the acyloin condensation reaction between C atoms 2 and 3 of pyruvate and glyceraldehyde 3-phosphate to yield 1-deoxy-D-xylulose-5-phosphate (DXP). This chain is 1-deoxy-D-xylulose-5-phosphate synthase, found in Prochlorococcus marinus (strain MIT 9215).